Here is a 259-residue protein sequence, read N- to C-terminus: Ubiquinone/menaquinone biosynthesis C-methyltransferase UbiE (259 aa).

S-adenosyl-L-methionine is bound by residues T82, D103, 131–132 (NA), and S148.

The protein belongs to the class I-like SAM-binding methyltransferase superfamily. MenG/UbiE family.

The enzyme catalyses a 2-demethylmenaquinol + S-adenosyl-L-methionine = a menaquinol + S-adenosyl-L-homocysteine + H(+). The catalysed reaction is a 2-methoxy-6-(all-trans-polyprenyl)benzene-1,4-diol + S-adenosyl-L-methionine = a 5-methoxy-2-methyl-3-(all-trans-polyprenyl)benzene-1,4-diol + S-adenosyl-L-homocysteine + H(+). It participates in quinol/quinone metabolism; menaquinone biosynthesis; menaquinol from 1,4-dihydroxy-2-naphthoate: step 2/2. Its pathway is cofactor biosynthesis; ubiquinone biosynthesis. In terms of biological role, methyltransferase required for the conversion of demethylmenaquinol (DMKH2) to menaquinol (MKH2) and the conversion of 2-polyprenyl-6-methoxy-1,4-benzoquinol (DDMQH2) to 2-polyprenyl-3-methyl-6-methoxy-1,4-benzoquinol (DMQH2). The polypeptide is Ubiquinone/menaquinone biosynthesis C-methyltransferase UbiE (Haemophilus ducreyi (strain 35000HP / ATCC 700724)).